The primary structure comprises 125 residues: Small ribosomal subunit protein uS12m (125 aa).

It belongs to the universal ribosomal protein uS12 family.

The protein resides in the mitochondrion. Functionally, protein S12 is involved in the translation initiation step. The protein is Small ribosomal subunit protein uS12m (RPS12) of Allium cepa (Onion).